Reading from the N-terminus, the 314-residue chain is 3'-5' exoribonuclease YhaM (314 aa).

Residues 163 to 279 form the HD domain; the sequence is HVVSMLNLAK…LHYIDNLDAK (117 aa).

It belongs to the YhaM family.

Shows a 3'-5' exoribonuclease activity. The polypeptide is 3'-5' exoribonuclease YhaM (Bacillus velezensis (strain DSM 23117 / BGSC 10A6 / LMG 26770 / FZB42) (Bacillus amyloliquefaciens subsp. plantarum)).